The chain runs to 146 residues: MGFTEKQEALVNSSWELFKQNPSYSVLFYTIILKKAPAAKGMFSFLKDSAEVVDSPKLQAHAEKVFGMVHDSAIQLRASGEVVLGDVTLGAIHIQKGVIDPHFVVVKEALLDTIKEASGEKWSEELSTAWEIAYEGLASAIKKAMN.

The Globin domain maps to 2 to 146; that stretch reads GFTEKQEALV…LASAIKKAMN (145 aa). Nitrated tyrosine is present on residues Tyr-24 and Tyr-29. Ser-44 is a binding site for heme b. At Ser-44 the chain carries Phosphoserine. O2 is bound at residue His-61. Positions 64, 93, and 96 each coordinate heme b. Tyr-134 is modified (nitrated tyrosine).

The protein belongs to the plant globin family. Monomer. Post-translationally, nitrated in effective nodules and particularly in hypoxic conditions; this mechanism may play a protective role in the symbiosis by buffering toxic peroxynitrite NO(2)(-). Nitration level decrease during nodule senescence. Phosphorylation at Ser-44 disrupts the molecular environment of its porphyrin ring oxygen binding pocket, thus leading to a reduced oxygen consumption and to the delivery of oxygen O(2) to symbiosomes. Root nodules.

Its subcellular location is the cytoplasm. It localises to the cytosol. It is found in the nucleus. Its function is as follows. Leghemoglobin that reversibly binds oxygen O(2) through a pentacoordinated heme iron. In root nodules, facilitates the diffusion of oxygen to the bacteroids while preventing the bacterial nitrogenase from being inactivated by buffering dioxygen, nitric oxide and carbon monoxide, and promoting the formation of reactive oxygen species (ROS, e.g. H(2)O(2)). This role is essential for symbiotic nitrogen fixation (SNF). The protein is Leghemoglobin Lb120-8 of Pisum sativum (Garden pea).